Consider the following 555-residue polypeptide: Potassium-transporting ATPase potassium-binding subunit (555 aa).

Transmembrane regions (helical) follow at residues 2–22, 60–80, 130–150, 173–193, 246–266, 278–298, 374–394, 412–432, 483–503, and 525–545; these read IWVA…PTGI, QYAL…YFIF, IGIT…VMAF, VFLP…VPQT, MSNI…PFTY, ILFV…TTSE, AGFV…GLMV, LIAV…ALAL, LVMF…AASL, and GIFI…MLVL.

This sequence belongs to the KdpA family. The system is composed of three essential subunits: KdpA, KdpB and KdpC.

The protein localises to the cell membrane. In terms of biological role, part of the high-affinity ATP-driven potassium transport (or Kdp) system, which catalyzes the hydrolysis of ATP coupled with the electrogenic transport of potassium into the cytoplasm. This subunit binds the extracellular potassium ions and delivers the ions to the membrane domain of KdpB through an intramembrane tunnel. This is Potassium-transporting ATPase potassium-binding subunit from Bacillus cereus (strain 03BB102).